A 309-amino-acid chain; its full sequence is Probable WRKY transcription factor 26 (309 aa).

Positions 1–24 (MGSFDRQRAVPKFKTATPSPLPLS) are disordered. The segment at residues 111 to 176 (SSNKTSDDGY…YKGSHNHPKP (66 aa)) is a DNA-binding region (WRKY 1). Zn(2+) contacts are provided by Cys142, Cys147, His171, and His173. Positions 167–210 (YKGSHNHPKPQSTKRSSSTAIAAHQNSSNGDGKDIGEDETEAKR) are disordered. Positions 175–196 (KPQSTKRSSSTAIAAHQNSSNG) are enriched in polar residues. Positions 197–210 (DGKDIGEDETEAKR) are enriched in basic and acidic residues. The segment at residues 228–293 (SDIDILDDGY…YEGKHKHQIP (66 aa)) is a DNA-binding region (WRKY 2). Residues Cys259, Cys264, His288, and His290 each coordinate Zn(2+).

It belongs to the WRKY group I family. As to quaternary structure, interacts with VQ10.

The protein localises to the nucleus. Transcription factor. Interacts specifically with the W box (5'-(T)TGAC[CT]-3'), a frequently occurring elicitor-responsive cis-acting element. Functions with WRKY25 and WRKY33 as positive regulator of plant thermotolerance by partially participating in ethylene-response signal transduction pathway. In Arabidopsis thaliana (Mouse-ear cress), this protein is Probable WRKY transcription factor 26 (WRKY26).